The primary structure comprises 513 residues: MNPSLNAFRPGRLLVAASLTASLLSLSVQAATLTRDNGAPVGDNQNSQTAGPNGSVLLQDVQLLQKLQRFDRERIPERVVHARGTGAHGEFVASADISDLSMAKVFRKGEKTPVFVRFSAVVHGNHSPETLRDPRGFATKFYTADGNWDLVGNNFPTFFIRDAIKFPDMVHAFKPDPRSNLDDDSRRFDFFSHVPEATRTLTLLYSNEGTPASYREMDGNSVHAYKLVNARGEVHYVKFHWKSLQGQKNLDPKQVAEVQGRDYSHMTNDLVSAIRKGDFPKWDLYIQVLKPEDLAKFDFDPLDATKIWPGIPERKIGQMVLNRNVDNFFQETEQVAMAPSNLVPGIEPSEDRLLQGRLFAYADTQMYRVGANGLGLPVNRPRSEVNTVNQDGALNAGHSTSGVNYQPSRLDPREEQASARYVRTPLSGTTQQAKIQREQNFKQTGELFRSYGKKDQADLIASLGGALAITDDESKYIMLSYFYKADSDYGTGLAKVAGADLQRVRQLAAKLQD.

An N-terminal signal peptide occupies residues 1–30 (MNPSLNAFRPGRLLVAASLTASLLSLSVQA). Residues histidine 81 and asparagine 153 contribute to the active site. Tyrosine 361 provides a ligand contact to heme. A compositionally biased stretch (polar residues) spans 391-407 (DGALNAGHSTSGVNYQP). The tract at residues 391-413 (DGALNAGHSTSGVNYQPSRLDPR) is disordered.

Belongs to the catalase family. Requires heme as cofactor.

The protein localises to the periplasm. The catalysed reaction is 2 H2O2 = O2 + 2 H2O. Its function is as follows. Decomposes hydrogen peroxide into water and oxygen; serves to protect cells from the toxic effects of hydrogen peroxide. This is Catalase (katB) from Pseudomonas aeruginosa (strain ATCC 15692 / DSM 22644 / CIP 104116 / JCM 14847 / LMG 12228 / 1C / PRS 101 / PAO1).